The following is a 369-amino-acid chain: Eukaryotic translation initiation factor 3 subunit F (369 aa).

The region spanning 31–170 is the MPN domain; that stretch reads VNIQPQAVFS…TKTYISAPVA (140 aa). Basic and acidic residues predominate over residues 309–334; it reads LDEGKEGGEKKDGEGAEGDKKTDGQR. Residues 309–369 form a disordered region; that stretch reads LDEGKEGGEK…EPREPREAAE (61 aa). A compositionally biased stretch (gly residues) spans 335-353; it reads GQRGQGGKRGGRSGGAGGR. Residues 354–369 are compositionally biased toward basic and acidic residues; the sequence is GGREQREPREPREAAE.

Belongs to the eIF-3 subunit F family. As to quaternary structure, component of the eukaryotic translation initiation factor 3 (eIF-3) complex.

It localises to the cytoplasm. Functionally, component of the eukaryotic translation initiation factor 3 (eIF-3) complex, which is involved in protein synthesis of a specialized repertoire of mRNAs and, together with other initiation factors, stimulates binding of mRNA and methionyl-tRNAi to the 40S ribosome. The eIF-3 complex specifically targets and initiates translation of a subset of mRNAs involved in cell proliferation. This chain is Eukaryotic translation initiation factor 3 subunit F, found in Neurospora crassa (strain ATCC 24698 / 74-OR23-1A / CBS 708.71 / DSM 1257 / FGSC 987).